Reading from the N-terminus, the 1012-residue chain is Alanine--tRNA ligase, mitochondrial (1012 aa).

A mitochondrion-targeting transit peptide spans 1–24 (MYNSAKQLQRVLTAREIRKTFLDH). The Zn(2+) site is built by His-656, His-660, Cys-766, and His-770.

This sequence belongs to the class-II aminoacyl-tRNA synthetase family. In terms of assembly, monomer. Zn(2+) serves as cofactor.

Its subcellular location is the mitochondrion. It carries out the reaction tRNA(Ala) + L-alanine + ATP = L-alanyl-tRNA(Ala) + AMP + diphosphate. Functionally, catalyzes the attachment of alanine to tRNA(Ala) in a two-step reaction: alanine is first activated by ATP to form Ala-AMP and then transferred to the acceptor end of tRNA(Ala). Also edits incorrectly charged tRNA(Ala) via its editing domain. The chain is Alanine--tRNA ligase, mitochondrial from Drosophila melanogaster (Fruit fly).